A 121-amino-acid polypeptide reads, in one-letter code: Large ribosomal subunit protein uL22 (121 aa).

The protein belongs to the universal ribosomal protein uL22 family. In terms of assembly, part of the 50S ribosomal subunit.

In terms of biological role, this protein binds specifically to 23S rRNA; its binding is stimulated by other ribosomal proteins, e.g. L4, L17, and L20. It is important during the early stages of 50S assembly. It makes multiple contacts with different domains of the 23S rRNA in the assembled 50S subunit and ribosome. Functionally, the globular domain of the protein is located near the polypeptide exit tunnel on the outside of the subunit, while an extended beta-hairpin is found that lines the wall of the exit tunnel in the center of the 70S ribosome. The protein is Large ribosomal subunit protein uL22 of Synechococcus sp. (strain CC9902).